The sequence spans 224 residues: MAEAKPAPEKEAAVKTESVPVADDEAASAKEGSTSLVSIDEYLAAGVHIGTQQKTQDMMRFVYRVRTDGLYVLDIQSTDERIRVASKLLSHYDPSRILVVSSRQYGQHPARMFSRALGTRAMLGRFIPGSLTNPQIHGFFEPDVIIVTDPAGDAQVLKEASSIGVPVIALCDTNNLTSNVDLVIPTNNKGRKALSLVYWLLAREVSRLNNTPFNYEMTDFETPL.

Residues 1 to 14 (MAEAKPAPEKEAAV) are compositionally biased toward basic and acidic residues. Residues 1–32 (MAEAKPAPEKEAAVKTESVPVADDEAASAKEG) form a disordered region.

Belongs to the universal ribosomal protein uS2 family.

The sequence is that of Small ribosomal subunit protein uS2 from Methanosarcina mazei (strain ATCC BAA-159 / DSM 3647 / Goe1 / Go1 / JCM 11833 / OCM 88) (Methanosarcina frisia).